The sequence spans 289 residues: ATP phosphoribosyltransferase (289 aa).

Belongs to the ATP phosphoribosyltransferase family. Long subfamily. The cofactor is Mg(2+).

Its subcellular location is the cytoplasm. The enzyme catalyses 1-(5-phospho-beta-D-ribosyl)-ATP + diphosphate = 5-phospho-alpha-D-ribose 1-diphosphate + ATP. Its pathway is amino-acid biosynthesis; L-histidine biosynthesis; L-histidine from 5-phospho-alpha-D-ribose 1-diphosphate: step 1/9. Feedback inhibited by histidine. Its function is as follows. Catalyzes the condensation of ATP and 5-phosphoribose 1-diphosphate to form N'-(5'-phosphoribosyl)-ATP (PR-ATP). Has a crucial role in the pathway because the rate of histidine biosynthesis seems to be controlled primarily by regulation of HisG enzymatic activity. The protein is ATP phosphoribosyltransferase of Pelotomaculum thermopropionicum (strain DSM 13744 / JCM 10971 / SI).